Reading from the N-terminus, the 754-residue chain is 5-methyltetrahydropteroyltriglutamate--homocysteine methyltransferase (754 aa).

Residues Arg-17–Lys-20 and Lys-117 each bind 5-methyltetrahydropteroyltri-L-glutamate. Residues Ile-431–Ser-433 and Glu-484 contribute to the L-homocysteine site. L-methionine contacts are provided by residues Ile-431–Ser-433 and Glu-484. 5-methyltetrahydropteroyltri-L-glutamate is bound by residues Arg-515–Cys-516 and Trp-561. Asp-599 is an L-homocysteine binding site. Asp-599 contacts L-methionine. A 5-methyltetrahydropteroyltri-L-glutamate-binding site is contributed by Glu-605. Residues His-641, Cys-643, and Glu-665 each coordinate Zn(2+). The Proton donor role is filled by His-694. Cys-726 serves as a coordination point for Zn(2+).

Belongs to the vitamin-B12 independent methionine synthase family. Zn(2+) is required as a cofactor.

It catalyses the reaction 5-methyltetrahydropteroyltri-L-glutamate + L-homocysteine = tetrahydropteroyltri-L-glutamate + L-methionine. It participates in amino-acid biosynthesis; L-methionine biosynthesis via de novo pathway; L-methionine from L-homocysteine (MetE route): step 1/1. Its function is as follows. Catalyzes the transfer of a methyl group from 5-methyltetrahydrofolate to homocysteine resulting in methionine formation. The polypeptide is 5-methyltetrahydropteroyltriglutamate--homocysteine methyltransferase (Salmonella newport (strain SL254)).